Reading from the N-terminus, the 384-residue chain is CDP-diacylglycerol--serine O-phosphatidyltransferase (384 aa).

The protein belongs to the CDP-alcohol phosphatidyltransferase class-I family.

The protein localises to the membrane. The catalysed reaction is a CDP-1,2-diacyl-sn-glycerol + L-serine = a 1,2-diacyl-sn-glycero-3-phospho-L-serine + CMP + H(+). It functions in the pathway phospholipid metabolism; phosphatidylethanolamine biosynthesis; phosphatidylethanolamine from CDP-diacylglycerol: step 1/2. The protein is CDP-diacylglycerol--serine O-phosphatidyltransferase (PSS) of Encephalitozoon cuniculi (strain GB-M1) (Microsporidian parasite).